Here is a 441-residue protein sequence, read N- to C-terminus: GTPase Der (441 aa).

EngA-type G domains lie at 4 to 168 (PVVA…PEDI) and 177 to 352 (IRIA…EQNS). Residues 10 to 17 (GRPNVGKS), 57 to 61 (DTGGI), 121 to 124 (NKVE), 183 to 190 (GRPNVGKS), 230 to 234 (DTAGM), and 295 to 298 (NKWD) contribute to the GTP site. The 85-residue stretch at 353–437 (TRVATATLNT…PIRMIVRQKD (85 aa)) folds into the KH-like domain.

The protein belongs to the TRAFAC class TrmE-Era-EngA-EngB-Septin-like GTPase superfamily. EngA (Der) GTPase family. In terms of assembly, associates with the 50S ribosomal subunit.

Its function is as follows. GTPase that plays an essential role in the late steps of ribosome biogenesis. This chain is GTPase Der, found in Desulfitobacterium hafniense (strain DSM 10664 / DCB-2).